An 89-amino-acid chain; its full sequence is Small ribosomal subunit protein bS20 (89 aa).

Positions 1-26 (MANSAQARKRARQADGQRSHNASLRS) are disordered.

This sequence belongs to the bacterial ribosomal protein bS20 family.

Functionally, binds directly to 16S ribosomal RNA. The sequence is that of Small ribosomal subunit protein bS20 from Dechloromonas aromatica (strain RCB).